Consider the following 341-residue polypeptide: tRNA N6-adenosine threonylcarbamoyltransferase (341 aa).

Residues histidine 114 and histidine 118 each coordinate Fe cation. Residues 136-140 (LVSGG), aspartate 169, glycine 182, aspartate 186, and asparagine 278 each bind substrate. Position 304 (aspartate 304) interacts with Fe cation.

Belongs to the KAE1 / TsaD family. Fe(2+) serves as cofactor.

The protein localises to the cytoplasm. The catalysed reaction is L-threonylcarbamoyladenylate + adenosine(37) in tRNA = N(6)-L-threonylcarbamoyladenosine(37) in tRNA + AMP + H(+). Its function is as follows. Required for the formation of a threonylcarbamoyl group on adenosine at position 37 (t(6)A37) in tRNAs that read codons beginning with adenine. Is involved in the transfer of the threonylcarbamoyl moiety of threonylcarbamoyl-AMP (TC-AMP) to the N6 group of A37, together with TsaE and TsaB. TsaD likely plays a direct catalytic role in this reaction. This is tRNA N6-adenosine threonylcarbamoyltransferase from Lactococcus lactis subsp. cremoris (strain MG1363).